The following is a 1203-amino-acid chain: DNA-directed RNA polymerase I subunit RPA135 (1203 aa).

An N-acetylserine modification is found at Ser-2. Ser-81 bears the Phosphoserine mark. A C4-type zinc finger spans residues 1104-1131; the sequence is CRECGSILTTQQSVPRIGSISTVCCRRC. Position 1156 is a phosphoserine (Ser-1156).

This sequence belongs to the RNA polymerase beta chain family. Component of the RNA polymerase I (Pol I) complex consisting of 14 subunits: RPA135, RPA190, RPC40, RPA14, RPB5, RPO26, RPA43, RPB8, RPA12, RPB10, RPC19, RPC10, RPA49 and RPA34. The complex is composed of a horseshoe-shaped core containing ten subunits (RPA135, RPA190, RPB5, RPO26, RPB8, RPB10, RPC10, RPA12, RPC19 and RPC40) where RPA135 and RPA190 form the DNA-binding cleft. Outside of the core, RPA14 and RPA43 form the stalk that mediates interactions with transcription initiation factors and newly synthesized RNA.

It is found in the nucleus. Its subcellular location is the nucleolus. It catalyses the reaction RNA(n) + a ribonucleoside 5'-triphosphate = RNA(n+1) + diphosphate. DNA-dependent RNA polymerases catalyze the transcription of DNA into RNA using the four ribonucleoside triphosphates as substrates. Component of RNA polymerase I (Pol I) which synthesizes ribosomal RNA precursors. Besides, RNA polymerase I has intrinsic RNA cleavage activity. RPA190 and RPA135 both contribute to the polymerase catalytic activity and together form the Pol I active center. In addition, subunit RPA12 contributes a catalytic zinc ribbon that is required for RNA cleavage by Pol I. A single stranded DNA template strand of the promoter is positioned within the central active site cleft of Pol I. A bridging helix emanates from RPA190 and crosses the cleft near the catalytic site and is thought to promote translocation of Pol I by acting as a ratchet that moves the RNA-DNA hybrid through the active site by switching from straight to bent conformations at each step of nucleotide addition. The chain is DNA-directed RNA polymerase I subunit RPA135 (RPA135) from Saccharomyces cerevisiae (strain ATCC 204508 / S288c) (Baker's yeast).